We begin with the raw amino-acid sequence, 310 residues long: Translocator protein BipD (310 aa).

Coiled coils occupy residues 127 to 171 (DPIL…LQDY) and 250 to 299 (DTAR…AIST).

It belongs to the invasin protein D family.

It localises to the secreted. In terms of biological role, required for invasion of epithelial cells, as well as for survival within host cells, escape from endocytic vesicles and subsequent actin-tail formation. Probably regulates the secretion of effectors BipB and BipC and their final integration into the target cell membrane. The sequence is that of Translocator protein BipD (bipD) from Burkholderia thailandensis (strain ATCC 700388 / DSM 13276 / CCUG 48851 / CIP 106301 / E264).